The following is a 279-amino-acid chain: HTH-type transcriptional regulator HdfR (279 aa).

An HTH lysR-type domain is found at 1-58 (MDTELLKTFLEVSRTRHFGRAAESLYLTQSAVSFRIRQLENQLGVNLFTRHRNNIRLT). Residues 18-37 (FGRAAESLYLTQSAVSFRIR) constitute a DNA-binding region (H-T-H motif).

The protein belongs to the LysR transcriptional regulatory family.

Functionally, negatively regulates the transcription of the flagellar master operon flhDC by binding to the upstream region of the operon. The protein is HTH-type transcriptional regulator HdfR of Shigella boydii serotype 18 (strain CDC 3083-94 / BS512).